The chain runs to 217 residues: MVGKRNLPVISRNFDLSPGVLRFSASRLRLKKGEKKPKFTKDTSAKLPKLQRNGTKFALGHSKTVTLRKTLTPGTVLIVLAGRHKGKRVVFLKQLPQSGLLLVTGPHKINGFPLRRIGQAFVIATSLKVNVSGVKIPEHINDEYFKRKSTAQKTGKNIFASGKTEYTVSEQRKKDIKTVDAPILAAIKKHPEHKFLFGYLGTRFSLGKNQYPHKMQF.

The protein belongs to the eukaryotic ribosomal protein eL6 family. Component of the large ribosomal subunit. May bind IPO9 with low affinity.

It localises to the cytoplasm. The protein resides in the cytosol. It is found in the rough endoplasmic reticulum. Component of the large ribosomal subunit. The protein is Large ribosomal subunit protein eL6 (rpl-6) of Caenorhabditis elegans.